The sequence spans 195 residues: Imidazoleglycerol-phosphate dehydratase (195 aa).

It belongs to the imidazoleglycerol-phosphate dehydratase family.

The protein resides in the cytoplasm. It catalyses the reaction D-erythro-1-(imidazol-4-yl)glycerol 3-phosphate = 3-(imidazol-4-yl)-2-oxopropyl phosphate + H2O. The protein operates within amino-acid biosynthesis; L-histidine biosynthesis; L-histidine from 5-phospho-alpha-D-ribose 1-diphosphate: step 6/9. This chain is Imidazoleglycerol-phosphate dehydratase, found in Pelobacter propionicus (strain DSM 2379 / NBRC 103807 / OttBd1).